The primary structure comprises 497 residues: Protein root UVB sensitive 6 (497 aa).

Belongs to the RUS1 family.

In terms of biological role, required for normal embryo development. This is Protein root UVB sensitive 6 from Arabidopsis thaliana (Mouse-ear cress).